We begin with the raw amino-acid sequence, 212 residues long: High frequency lysogenization protein HflD homolog (212 aa).

Belongs to the HflD family.

The protein localises to the cytoplasm. It localises to the cell inner membrane. The polypeptide is High frequency lysogenization protein HflD homolog (Pectobacterium carotovorum subsp. carotovorum (strain PC1)).